We begin with the raw amino-acid sequence, 624 residues long: Carbon monoxide dehydrogenase (624 aa).

[4Fe-4S] cluster-binding residues include C37, C46, C49, C54, and C65. Positions 256, 292, 336, 444, 475, and 516 each coordinate [Ni-4Fe-5S] cluster.

This sequence belongs to the Ni-containing carbon monoxide dehydrogenase family. In terms of assembly, homodimer. [4Fe-4S] cluster serves as cofactor. [Ni-4Fe-5S] cluster is required as a cofactor.

It carries out the reaction CO + 2 oxidized [2Fe-2S]-[ferredoxin] + H2O = 2 reduced [2Fe-2S]-[ferredoxin] + CO2 + 2 H(+). Its function is as follows. CODH oxidizes carbon monoxide coupled, via CooF, to the reduction of a hydrogen cation by a hydrogenase (possibly CooH). In Methanocaldococcus jannaschii (strain ATCC 43067 / DSM 2661 / JAL-1 / JCM 10045 / NBRC 100440) (Methanococcus jannaschii), this protein is Carbon monoxide dehydrogenase (cooS).